The primary structure comprises 370 residues: Chorismate synthase (370 aa).

Arg48 lines the NADP(+) pocket. Residues 125 to 127 (RSS), 241 to 242 (NA), Gly285, 300 to 304 (KPTSS), and Arg326 contribute to the FMN site.

The protein belongs to the chorismate synthase family. In terms of assembly, homotetramer. It depends on FMNH2 as a cofactor.

It catalyses the reaction 5-O-(1-carboxyvinyl)-3-phosphoshikimate = chorismate + phosphate. Its pathway is metabolic intermediate biosynthesis; chorismate biosynthesis; chorismate from D-erythrose 4-phosphate and phosphoenolpyruvate: step 7/7. Functionally, catalyzes the anti-1,4-elimination of the C-3 phosphate and the C-6 proR hydrogen from 5-enolpyruvylshikimate-3-phosphate (EPSP) to yield chorismate, which is the branch point compound that serves as the starting substrate for the three terminal pathways of aromatic amino acid biosynthesis. This reaction introduces a second double bond into the aromatic ring system. This chain is Chorismate synthase, found in Jannaschia sp. (strain CCS1).